A 291-amino-acid chain; its full sequence is Beta-lactamase OXY-1 (291 aa).

Residues 1–24 (MLKSSWRKTALMAAAAVPLLLASG) form the signal peptide. Serine 73 (acyl-ester intermediate) is an active-site residue. Position 237–239 (237–239 (KTG)) interacts with substrate.

This sequence belongs to the class-A beta-lactamase family.

It catalyses the reaction a beta-lactam + H2O = a substituted beta-amino acid. Hydrolyzes broad-spectrum beta-lactam antibiotics. Active against cephalosporins. In Klebsiella oxytoca, this protein is Beta-lactamase OXY-1 (bla).